Reading from the N-terminus, the 564-residue chain is 4-hydroxy-7-methoxy-3-oxo-3,4-dihydro-2H-1,4-benzoxazin-2-yl glucoside beta-D-glucosidase 1d, chloroplastic (564 aa).

A chloroplast-targeting transit peptide spans 1–50; that stretch reads MALLAAATLNPTTHLSLRSRAGRNSENLWLRSAASSQKSKGRFCNLTVRA. A beta-D-glucoside-binding positions include Q92, H194, and 239–240; that span reads NE. E240 (proton donor) is an active-site residue. A disulfide bond links C259 and C265. Residues Y383, E456, W504, 511-512, and F520 contribute to the a beta-D-glucoside site; that span reads EW. The active-site Nucleophile is E456.

The protein belongs to the glycosyl hydrolase 1 family. In terms of assembly, homo- and heterohexamers. Expressed in young seedlings early after germination.

It is found in the plastid. The protein localises to the chloroplast. It carries out the reaction Hydrolysis of terminal, non-reducing beta-D-glucosyl residues with release of beta-D-glucose.. The catalysed reaction is DIMBOA beta-D-glucoside + H2O = DIMBOA + D-glucose. The enzyme catalyses DIBOA beta-D-glucoside + H2O = DIBOA + D-glucose. Its function is as follows. Acts in defense of young plant parts against pests via the production of hydroxamic acids from hydroxamic acid glucosides. Enzymatic activity is highly correlated with plant growth. The preferred substrate is DIMBOA-beta-D-glucoside. The chain is 4-hydroxy-7-methoxy-3-oxo-3,4-dihydro-2H-1,4-benzoxazin-2-yl glucoside beta-D-glucosidase 1d, chloroplastic (GLU1D) from Triticum aestivum (Wheat).